Consider the following 121-residue polypeptide: Large ribosomal subunit protein bL20 (121 aa).

Belongs to the bacterial ribosomal protein bL20 family.

Functionally, binds directly to 23S ribosomal RNA and is necessary for the in vitro assembly process of the 50S ribosomal subunit. It is not involved in the protein synthesizing functions of that subunit. The chain is Large ribosomal subunit protein bL20 from Ruegeria sp. (strain TM1040) (Silicibacter sp.).